Consider the following 166-residue polypeptide: 2-amino-4-hydroxy-6-hydroxymethyldihydropteridine pyrophosphokinase (166 aa).

The protein belongs to the HPPK family.

The catalysed reaction is 6-hydroxymethyl-7,8-dihydropterin + ATP = (7,8-dihydropterin-6-yl)methyl diphosphate + AMP + H(+). Its pathway is cofactor biosynthesis; tetrahydrofolate biosynthesis; 2-amino-4-hydroxy-6-hydroxymethyl-7,8-dihydropteridine diphosphate from 7,8-dihydroneopterin triphosphate: step 4/4. Functionally, catalyzes the transfer of pyrophosphate from adenosine triphosphate (ATP) to 6-hydroxymethyl-7,8-dihydropterin, an enzymatic step in folate biosynthesis pathway. This Streptococcus pyogenes serotype M1 protein is 2-amino-4-hydroxy-6-hydroxymethyldihydropteridine pyrophosphokinase (folK).